A 144-amino-acid chain; its full sequence is Large ribosomal subunit protein uL16 (144 aa).

Residues 1-16 (MLIPKRVKYRKQHRPR) are compositionally biased toward basic residues. Positions 1–25 (MLIPKRVKYRKQHRPRGNGGVSKGG) are disordered.

It belongs to the universal ribosomal protein uL16 family. Part of the 50S ribosomal subunit.

In terms of biological role, binds 23S rRNA and is also seen to make contacts with the A and possibly P site tRNAs. In Desulforamulus reducens (strain ATCC BAA-1160 / DSM 100696 / MI-1) (Desulfotomaculum reducens), this protein is Large ribosomal subunit protein uL16.